The chain runs to 469 residues: Cold shock protein CS66 (469 aa).

21 consecutive repeat copies span residues 9-31, 49-62, 72-94, 95-108, 115-128, 135-148, 149-162, 170-192, 193-206, 213-226, 234-256, 257-270, 277-290, 298-320, 321-334, 341-354, 362-384, 385-398, 405-418, 428-441, and 452-469. Residues 9–390 form a 7 X 23 AA approximate repeats region; the sequence is GEKKGIMEKI…DHQQTGGAYG (382 aa). Positions 49–441 are 14 X 14 AA approximate repeats; sequence TGGAYGQEGH…HGQHGHTGTT (393 aa). A disordered region spans residues 87–112; it reads GGHADHQQTGGTYGQQGHTGTATHGT. Low complexity predominate over residues 93 to 112; it reads QQTGGTYGQQGHTGTATHGT. Low complexity predominate over residues 203–214; that stretch reads FATGTHGTPATG. Positions 203–469 are disordered; that stretch reads FATGTHGTPA…KIKDKLPGQH (267 aa). Residues 233 to 254 are compositionally biased toward basic and acidic residues; that stretch reads TGEKKGLMENIKDKLPGGHGDH. Over residues 255-274 the composition is skewed to low complexity; sequence QQTGGTYGQQGHTGAATHGT. The span at 288-301 shows a compositional bias: gly residues; that stretch reads GMTGTGTHGTGGKK. A compositionally biased stretch (basic and acidic residues) spans 302-312; the sequence is GVMENIKDKLP. Residues 361–382 are compositionally biased toward basic and acidic residues; the sequence is TGEKKAVMENIKDKLPGGHGDH. Low complexity-rich tracts occupy residues 383 to 402 and 412 to 429; these read QQTGGAYGQQGHTGTATHGT and HGNTGMTGTETHGTTATG. Residues 439 to 450 show a composition bias toward gly residues; the sequence is GTTGTGTHGTDG. Positions 451-469 are enriched in basic and acidic residues; that stretch reads VGEKKSLMDKIKDKLPGQH.

Belongs to the plant dehydrin family.

May reduce intracellular freezing damage during winter by hydrogen-bonding to the lattice of the nascent ice crystals, thus modifying the structure and/or propagation of ice crystals. This Triticum aestivum (Wheat) protein is Cold shock protein CS66 (CS66).